A 174-amino-acid chain; its full sequence is Large ribosomal subunit protein uL10 (174 aa).

It belongs to the universal ribosomal protein uL10 family. Part of the ribosomal stalk of the 50S ribosomal subunit. The N-terminus interacts with L11 and the large rRNA to form the base of the stalk. The C-terminus forms an elongated spine to which L12 dimers bind in a sequential fashion forming a multimeric L10(L12)X complex.

Forms part of the ribosomal stalk, playing a central role in the interaction of the ribosome with GTP-bound translation factors. The polypeptide is Large ribosomal subunit protein uL10 (Rubrobacter xylanophilus (strain DSM 9941 / JCM 11954 / NBRC 16129 / PRD-1)).